Reading from the N-terminus, the 445-residue chain is Tubulin beta chain (445 aa).

Residues Gln-11, Glu-69, Ser-138, Gly-142, Thr-143, Gly-144, Asn-205, and Asn-227 each coordinate GTP. Residue Glu-69 participates in Mg(2+) binding.

This sequence belongs to the tubulin family. Dimer of alpha and beta chains. A typical microtubule is a hollow water-filled tube with an outer diameter of 25 nm and an inner diameter of 15 nM. Alpha-beta heterodimers associate head-to-tail to form protofilaments running lengthwise along the microtubule wall with the beta-tubulin subunit facing the microtubule plus end conferring a structural polarity. Microtubules usually have 13 protofilaments but different protofilament numbers can be found in some organisms and specialized cells. It depends on Mg(2+) as a cofactor.

It localises to the cytoplasm. The protein localises to the cytoskeleton. Tubulin is the major constituent of microtubules, a cylinder consisting of laterally associated linear protofilaments composed of alpha- and beta-tubulin heterodimers. Microtubules grow by the addition of GTP-tubulin dimers to the microtubule end, where a stabilizing cap forms. Below the cap, tubulin dimers are in GDP-bound state, owing to GTPase activity of alpha-tubulin. This Ajellomyces capsulatus (Darling's disease fungus) protein is Tubulin beta chain (TUB2).